The primary structure comprises 1141 residues: PR domain zinc finger protein 15 (1141 aa).

In terms of domain architecture, SET spans 49-159 (PNLEIRRLED…PGTELRVWYA (111 aa)). A C2H2-type 1 zinc finger spans residues 197-219 (WACKVCSATFLELQLLNEHLLGH). The disordered stretch occupies residues 224 to 283 (KSLPPGSQSEAAAPEKEQDTPRGEPPAVPESENVATKEQKKKPRRGRKPKVSKAEQPLVI). A compositionally biased stretch (basic and acidic residues) spans 236 to 245 (APEKEQDTPR). Residues 262 to 274 (QKKKPRRGRKPKV) show a composition bias toward basic residues. C2H2-type zinc fingers lie at residues 372–394 (YQCN…VRSH), 399–422 (FKCE…SYKH), 460–482 (FQCE…KKKH), and 487–509 (FACE…QRRH). Residue K517 forms a Glycyl lysine isopeptide (Lys-Gly) (interchain with G-Cter in SUMO2) linkage. 2 consecutive C2H2-type zinc fingers follow at residues 536–558 (SGCP…LLTH) and 563–585 (YTCE…IHVH). Residues 604–623 (IGISSEENDDNSDESADSEP) form a disordered region. A compositionally biased stretch (acidic residues) spans 609–620 (EENDDNSDESAD). 9 consecutive C2H2-type zinc fingers follow at residues 626-649 (YSCK…MEVH), 654-676 (YGCS…MVIH), 690-712 (HPCE…KLIH), 718-740 (HACE…MRVH), 746-768 (YLCA…MKLH), 774-796 (YECK…CKRH), 802-824 (FMCE…KLIH), 830-853 (WTCS…QLTH), and 859-882 (QSCQ…RRKH). Disordered stretches follow at residues 922-973 (AEGK…DETN) and 1108-1141 (QTDV…MYSY). Residues 927 to 938 (GKAAKRSHKRKQ) show a composition bias toward basic residues. A compositionally biased stretch (low complexity) spans 1121-1141 (PQQAAQPQVQAEQQQQQMYSY).

It belongs to the class V-like SAM-binding methyltransferase superfamily. Detected in all tissues examined.

It is found in the nucleus. Sequence-specific DNA-binding transcriptional regulator. Plays a role as a molecular node in a transcriptional network regulating embryonic development and cell fate decision. Stimulates the expression of upstream key transcriptional activators and repressors of the Wnt/beta-catenin and MAPK/ERK pathways, respectively, that are essential for naive pluripotency and self-renewal maintenance of embryonic stem cells (ESCs). Specifically promotes SPRY1 and RSPO1 transcription activation through recognition and direct binding of a specific DNA sequence in their promoter regions. Involved in early embryo development. Also plays a role in induced pluripotent stem cells (iPSCs) reprogramming. This chain is PR domain zinc finger protein 15, found in Homo sapiens (Human).